We begin with the raw amino-acid sequence, 371 residues long: Aromatic peroxygenase (371 aa).

The first 18 residues, 1 to 18 (MKYFPLFPTLVFAARVVA), serve as a signal peptide directing secretion. Positions 19–43 (FPAYASLAGLSQQELDAIIPTLEAR) are excised as a propeptide. N54 is a glycosylation site (N-linked (GlcNAc...) asparagine). C79 serves as a coordination point for heme. N-linked (GlcNAc...) asparagine glycans are attached at residues N184, N204, N225, and N329. C321 and C362 form a disulfide bridge.

Belongs to the chloroperoxidase family. Requires heme b as cofactor. N-glycosylated.

It catalyses the reaction RH + H2O2 = ROH + H2O.. Functionally, aromatic peroxidase that oxidizes aryl alcohols into the corresponding aldehydes and then into the corresponding benzoic acids. Oxidizes toluene and naphthalene. Catalyzes the regioselective peroxide-dependent hydroxylation of propranolol and diclofenac to 5-hydroxypropranolol and 4'-hydroxydiclofenac. Catalyzes the regioselective peroxide-dependent hydroxylation of naphthalene to 1-naphthol or 2-naphthol via a naphthalene 1,2-oxide intermediate. Catalyzes the regioselective peroxide-dependent oxidation of pyridine to pyridine N-oxide. Halogenates monochlorodimedone and phenol. Oxidizes the sulfur-containing heterocycle dibenzothiophene to yield ring-hydroxylation products and to a lesser extent sulfoxidation products. The chain is Aromatic peroxygenase from Cyclocybe aegerita (Black poplar mushroom).